The chain runs to 180 residues: Large ribosomal subunit protein uL6 (180 aa).

This sequence belongs to the universal ribosomal protein uL6 family. Part of the 50S ribosomal subunit.

This protein binds to the 23S rRNA, and is important in its secondary structure. It is located near the subunit interface in the base of the L7/L12 stalk, and near the tRNA binding site of the peptidyltransferase center. This is Large ribosomal subunit protein uL6 from Thermodesulfovibrio yellowstonii (strain ATCC 51303 / DSM 11347 / YP87).